The chain runs to 550 residues: Glucose-6-phosphate isomerase 1 (550 aa).

Glu353 (proton donor) is an active-site residue. Active-site residues include His384 and Lys512.

Belongs to the GPI family.

The protein localises to the cytoplasm. The enzyme catalyses alpha-D-glucose 6-phosphate = beta-D-fructose 6-phosphate. It participates in carbohydrate biosynthesis; gluconeogenesis. Its pathway is carbohydrate degradation; glycolysis; D-glyceraldehyde 3-phosphate and glycerone phosphate from D-glucose: step 2/4. Its function is as follows. Catalyzes the reversible isomerization of glucose-6-phosphate to fructose-6-phosphate. This Thiobacillus denitrificans (strain ATCC 25259 / T1) protein is Glucose-6-phosphate isomerase 1.